The sequence spans 1004 residues: 2-oxoglutarate dehydrogenase E1 component (1004 aa).

This sequence belongs to the alpha-ketoglutarate dehydrogenase family. As to quaternary structure, homodimer. Part of the 2-oxoglutarate dehydrogenase (OGDH) complex composed of E1 (2-oxoglutarate dehydrogenase), E2 (dihydrolipoamide succinyltransferase) and E3 (dihydrolipoamide dehydrogenase); the complex contains multiple copies of the three enzymatic components (E1, E2 and E3). The cofactor is thiamine diphosphate.

The catalysed reaction is N(6)-[(R)-lipoyl]-L-lysyl-[protein] + 2-oxoglutarate + H(+) = N(6)-[(R)-S(8)-succinyldihydrolipoyl]-L-lysyl-[protein] + CO2. E1 component of the 2-oxoglutarate dehydrogenase (OGDH) complex which catalyzes the decarboxylation of 2-oxoglutarate, the first step in the conversion of 2-oxoglutarate to succinyl-CoA and CO(2). The polypeptide is 2-oxoglutarate dehydrogenase E1 component (Brucella suis biovar 1 (strain 1330)).